The primary structure comprises 242 residues: Probable transcriptional regulatory protein STH1004 (242 aa).

The protein belongs to the TACO1 family.

It is found in the cytoplasm. This chain is Probable transcriptional regulatory protein STH1004, found in Symbiobacterium thermophilum (strain DSM 24528 / JCM 14929 / IAM 14863 / T).